The primary structure comprises 143 residues: Large ribosomal subunit protein uL13 (143 aa).

It belongs to the universal ribosomal protein uL13 family. As to quaternary structure, part of the 50S ribosomal subunit.

Functionally, this protein is one of the early assembly proteins of the 50S ribosomal subunit, although it is not seen to bind rRNA by itself. It is important during the early stages of 50S assembly. This Prochlorococcus marinus subsp. pastoris (strain CCMP1986 / NIES-2087 / MED4) protein is Large ribosomal subunit protein uL13.